The sequence spans 283 residues: Phosphate import ATP-binding protein PstB (283 aa).

Positions 1–20 (MAQTLAQTKQISQSHTFDVS) are enriched in polar residues. Residues 1 to 32 (MAQTLAQTKQISQSHTFDVSQSHHKTPDDTNS) form a disordered region. The ABC transporter domain occupies 37-278 (YSTQNLDLWY…PSNKKTEDYI (242 aa)). Residue 69–76 (GPSGCGKS) coordinates ATP.

This sequence belongs to the ABC transporter superfamily. Phosphate importer (TC 3.A.1.7) family. In terms of assembly, the complex is composed of two ATP-binding proteins (PstB), two transmembrane proteins (PstC and PstA) and a solute-binding protein (PstS).

The protein resides in the cell membrane. The enzyme catalyses phosphate(out) + ATP + H2O = ADP + 2 phosphate(in) + H(+). In terms of biological role, part of the ABC transporter complex PstSACB involved in phosphate import. Responsible for energy coupling to the transport system. The chain is Phosphate import ATP-binding protein PstB from Staphylococcus aureus (strain MRSA252).